Reading from the N-terminus, the 102-residue chain is snRNA-activating protein complex subunit 5 (102 aa).

Residues 73 to 82 (QTTLKLSTRS) are compositionally biased toward polar residues. The interval 73 to 102 (QTTLKLSTRSPMEEEEEEEEEEEEEEESDS) is disordered. A compositionally biased stretch (acidic residues) spans 85 to 102 (EEEEEEEEEEEEEEESDS).

As to quaternary structure, part of the SNAPc complex composed of 5 subunits: SNAPC1, SNAPC2, SNAPC3, SNAPC4 and SNAPC5. SNAPC5 interacts with SNAPC4.

It localises to the nucleus. In terms of biological role, part of the SNAPc complex required for the transcription of both RNA polymerase II and III small-nuclear RNA genes. Binds to the proximal sequence element (PSE), a non-TATA-box basal promoter element common to these 2 types of genes. Recruits TBP and BRF2 to the U6 snRNA TATA box. The protein is snRNA-activating protein complex subunit 5 of Mus musculus (Mouse).